The sequence spans 138 residues: MARLTVEECMGRTNNKFKLVILASQRAHDLNSGACPVIKHKNGKNTVIALKEIAAKQLDVSSLFNLSVQRCRKYMEKFINSDEQCVTNKSKIDIFQQNAITSSFNELGNNSNNQGSNLLGRDNFFSTPENRNTSNTDS.

A disordered region spans residues 117–138 (NLLGRDNFFSTPENRNTSNTDS). A compositionally biased stretch (polar residues) spans 124 to 138 (FFSTPENRNTSNTDS).

It belongs to the RNA polymerase subunit omega family. The RNAP catalytic core consists of 2 alpha, 1 beta, 1 beta' and 1 omega subunit. When a sigma factor is associated with the core the holoenzyme is formed, which can initiate transcription.

The enzyme catalyses RNA(n) + a ribonucleoside 5'-triphosphate = RNA(n+1) + diphosphate. Its function is as follows. Promotes RNA polymerase assembly. Latches the N- and C-terminal regions of the beta' subunit thereby facilitating its interaction with the beta and alpha subunits. The sequence is that of DNA-directed RNA polymerase subunit omega from Ehrlichia canis (strain Jake).